We begin with the raw amino-acid sequence, 484 residues long: Transcription factor cghD (484 aa).

Residues 21-54 constitute a DNA-binding region (zn(2)-C6 fungal-type); sequence CDRCRLQKLKCTVQSMESDGRMVCERCVRAKVPC. Disordered regions lie at residues 59-117, 136-174, 202-242, and 386-406; these read RRRA…PTLA, TTAP…SGSS, PAST…FSTT, and HMHS…ELPS. Residues 64 to 76 show a composition bias toward basic and acidic residues; sequence RPSDTKKQGDSST. A compositionally biased stretch (low complexity) spans 77 to 107; the sequence is RRSTAPRTTNPEPTVLTPPLSTTSSTSEQTL. Residues 202–213 are compositionally biased toward low complexity; that stretch reads PASTSTSTGSPT.

Its subcellular location is the nucleus. Functionally, transcription factor that regulates the expression of the gene cluster that mediates the biosynthesis of the tetramic acid Sch210972, a potential anti-HIV fungal natural product that contains a decalin core. This Chaetomium globosum (strain ATCC 6205 / CBS 148.51 / DSM 1962 / NBRC 6347 / NRRL 1970) (Soil fungus) protein is Transcription factor cghD.